A 353-amino-acid chain; its full sequence is DNA polymerase IV (353 aa).

The UmuC domain maps to 14–198 (IIHIDMDAFF…MDISKFHGVG (185 aa)). The Mg(2+) site is built by Asp-18 and Asp-116. Residue Glu-117 is part of the active site.

Belongs to the DNA polymerase type-Y family. As to quaternary structure, monomer. The cofactor is Mg(2+).

The protein resides in the cytoplasm. The catalysed reaction is DNA(n) + a 2'-deoxyribonucleoside 5'-triphosphate = DNA(n+1) + diphosphate. In terms of biological role, poorly processive, error-prone DNA polymerase involved in untargeted mutagenesis. Copies undamaged DNA at stalled replication forks, which arise in vivo from mismatched or misaligned primer ends. These misaligned primers can be extended by PolIV. Exhibits no 3'-5' exonuclease (proofreading) activity. May be involved in translesional synthesis, in conjunction with the beta clamp from PolIII. The sequence is that of DNA polymerase IV from Streptococcus pneumoniae serotype 4 (strain ATCC BAA-334 / TIGR4).